A 95-amino-acid chain; its full sequence is uncharacterized protein (95 aa).

The stretch at 14–50 (KMEQKLQEQLDGLLEKYTELLLGETNDELKEEVKQWI) forms a coiled coil.

This is an uncharacterized protein from Bacillus subtilis (strain 168).